A 792-amino-acid chain; its full sequence is Lon protease (792 aa).

A Lon N-terminal domain is found at aspartate 16–leucine 211. Position 361–368 (glycine 361–threonine 368) interacts with ATP. One can recognise a Lon proteolytic domain in the interval threonine 597–proline 778. Residues serine 684 and lysine 727 contribute to the active site.

Belongs to the peptidase S16 family. As to quaternary structure, homohexamer. Organized in a ring with a central cavity.

It localises to the cytoplasm. The catalysed reaction is Hydrolysis of proteins in presence of ATP.. ATP-dependent serine protease that mediates the selective degradation of mutant and abnormal proteins as well as certain short-lived regulatory proteins. Required for cellular homeostasis and for survival from DNA damage and developmental changes induced by stress. Degrades polypeptides processively to yield small peptide fragments that are 5 to 10 amino acids long. Binds to DNA in a double-stranded, site-specific manner. The protein is Lon protease of Phenylobacterium zucineum (strain HLK1).